Reading from the N-terminus, the 324-residue chain is Ribosomal RNA small subunit methyltransferase H (324 aa).

Residues 35 to 37 (GGH), Asp-55, Phe-85, Asp-103, and Gln-110 contribute to the S-adenosyl-L-methionine site.

The protein belongs to the methyltransferase superfamily. RsmH family.

The protein resides in the cytoplasm. The enzyme catalyses cytidine(1402) in 16S rRNA + S-adenosyl-L-methionine = N(4)-methylcytidine(1402) in 16S rRNA + S-adenosyl-L-homocysteine + H(+). Functionally, specifically methylates the N4 position of cytidine in position 1402 (C1402) of 16S rRNA. In Solidesulfovibrio magneticus (strain ATCC 700980 / DSM 13731 / RS-1) (Desulfovibrio magneticus), this protein is Ribosomal RNA small subunit methyltransferase H.